Reading from the N-terminus, the 151-residue chain is Sigma factor binding protein 1, chloroplastic (151 aa).

Positions 1–13 are enriched in low complexity; sequence MESSSSTFLTTTS. Disordered regions lie at residues 1–41 and 66–93; these read MESS…KPIK and TGQD…PPAE. The transit peptide at 1–54 directs the protein to the chloroplast; the sequence is MESSSSTFLTTTSLDKKKPSPVSRKSPKQKKKTTSTNKPIKVRYISNPMRVQTC. A Bipartite nuclear localization signal motif is present at residues 16–32; it reads KKKPSPVSRKSPKQKKK. Positions 58 to 67 match the VQ motif; it reads FRELVQELTG.

As to quaternary structure, interacts with the sigma factor SIGA in chloroplast. Interacts with WRKY25 and WRKY33 in the nucleus. Expressed in leaves and roots, but not in flowers.

It localises to the plastid. Its subcellular location is the chloroplast. The protein resides in the nucleus. Contributes to plant defense. May regulate chloroplast metabolism upon infection with pathogens such as Pseudomonas syringae. Functions as activator of WRKY33 in plant defense against necrotrophic pathogens by stimulating the DNA-binding activity of WRKY33. This Arabidopsis thaliana (Mouse-ear cress) protein is Sigma factor binding protein 1, chloroplastic (SIB1).